Here is a 341-residue protein sequence, read N- to C-terminus: Processive diacylglycerol beta-glycosyltransferase (341 aa).

The protein belongs to the glycosyltransferase 2 family. Mg(2+) serves as cofactor.

It is found in the cell membrane. The catalysed reaction is a 1,2-diacyl-sn-glycerol + UDP-alpha-D-glucose = a 1,2-diacyl-3-O-(beta-D-glucopyranosyl)-sn-glycerol + UDP + H(+). The enzyme catalyses a 1,2-diacyl-sn-glycerol + UDP-alpha-D-galactose = a 1,2-diacyl-3-O-(beta-D-galactosyl)-sn-glycerol + UDP + H(+). It carries out the reaction a 1,2-diacyl-3-O-(beta-D-glucopyranosyl)-sn-glycerol + UDP-alpha-D-glucose = a 1,2-diacyl-3-O-(beta-D-Glc-(1-&gt;6)-beta-D-Glc)-sn-glycerol + UDP + H(+). It catalyses the reaction a 1,2-diacyl-3-O-(beta-D-galactosyl)-sn-glycerol + UDP-alpha-D-galactose = a 1,2-diacyl-3-O-[beta-D-galactosyl-(1-&gt;6)-beta-D-galactosyl]-sn-glycerol + UDP + H(+). It functions in the pathway glycolipid metabolism; diglucosyl-diacylglycerol biosynthesis. With respect to regulation, activated by the negatively charged lipid dioleoylphosphatidylglycerol (DOPG) and inhibited by N-(n-nonyl)deoxygalactonojirimycin (C9J). Processive glycosyltransferase involved in the biosynthesis of both the non-bilayer-prone beta-monoglycosyldiacylglycerol and the bilayer-forming membrane lipid beta-diglycosyldiacylglycerol. These components contribute to regulate the properties and stability of the membrane. Catalyzes sequentially the transfers of glucosyl or galactosyl residues from UDP-Glc or UDP-Gal to diacylglycerol (DAG) acceptor to form the corresponding beta-glycosyl-DAG (3-O-(beta-D-glycopyranosyl)-1,2-diacyl-sn-glycerol), which then acts as acceptor to give beta-diglycosyl-DAG product (3-O-(beta-D-glycopyranosyl-beta-(1-&gt;6)-D-glycopyranosyl)-1,2-diacyl-sn-glycerol). Dioleoylglycerol (DOG) is a preferred sugar acceptor than 3-O-(beta-D-glucopyranosyl)-1,2-dioleoyl-sn-glycerol. The chain is Processive diacylglycerol beta-glycosyltransferase from Mycoplasma genitalium (strain ATCC 33530 / DSM 19775 / NCTC 10195 / G37) (Mycoplasmoides genitalium).